Reading from the N-terminus, the 218-residue chain is UPF0598 protein C8orf82 homolog (218 aa).

Belongs to the UPF0598 family.

This Bos taurus (Bovine) protein is UPF0598 protein C8orf82 homolog.